The chain runs to 203 residues: SCO2-like protein RT0576 (203 aa).

The Thioredoxin domain maps to 42 to 203 (KDNIKIGEAF…KEIMEFLRNE (162 aa)). Positions 80, 84, and 170 each coordinate Cu cation.

Belongs to the SCO1/2 family.

The protein is SCO2-like protein RT0576 of Rickettsia typhi (strain ATCC VR-144 / Wilmington).